Consider the following 191-residue polypeptide: DNA-directed RNA polymerase subunit Rpo3 (191 aa).

This sequence belongs to the archaeal Rpo3/eukaryotic RPB3 RNA polymerase subunit family. As to quaternary structure, part of the RNA polymerase complex. Interacts with Rpo12. Forms an Rpo3-Rpo10-Rpo11-Rpo12 complex upon coexpression.

The protein localises to the cytoplasm. It catalyses the reaction RNA(n) + a ribonucleoside 5'-triphosphate = RNA(n+1) + diphosphate. In terms of biological role, DNA-dependent RNA polymerase (RNAP) catalyzes the transcription of DNA into RNA using the four ribonucleoside triphosphates as substrates. The polypeptide is DNA-directed RNA polymerase subunit Rpo3 (Methanocaldococcus jannaschii (strain ATCC 43067 / DSM 2661 / JAL-1 / JCM 10045 / NBRC 100440) (Methanococcus jannaschii)).